Consider the following 548-residue polypeptide: Eukaryotic translation initiation factor 3 subunit D (548 aa).

An N6-acetyllysine modification is found at lysine 53. The residue at position 161 (serine 161) is a Phosphoserine. Residues 285-299 (DFDLLTVSETANEPP) are RNA gate. Positions 523 to 548 (PDGTFSSDEDEEEEEEEEEEEEEEET) are disordered. 2 positions are modified to phosphoserine: serine 528 and serine 529. The span at 529-548 (SDEDEEEEEEEEEEEEEEET) shows a compositional bias: acidic residues.

It belongs to the eIF-3 subunit D family. As to quaternary structure, component of the eukaryotic translation initiation factor 3 (eIF-3) complex, which is composed of 13 subunits: EIF3A, EIF3B, EIF3C, EIF3D, EIF3E, EIF3F, EIF3G, EIF3H, EIF3I, EIF3J, EIF3K, EIF3L and EIF3M. The eIF-3 complex appears to include 3 stable modules: module A is composed of EIF3A, EIF3B, EIF3G and EIF3I; module B is composed of EIF3F, EIF3H, and EIF3M; and module C is composed of EIF3C, EIF3D, EIF3E, EIF3K and EIF3L. EIF3C of module C binds EIF3B of module A and EIF3H of module B, thereby linking the three modules. EIF3J is a labile subunit that binds to the eIF-3 complex via EIF3B. The eIF-3 complex interacts with RPS6KB1 under conditions of nutrient depletion. Mitogenic stimulation leads to binding and activation of a complex composed of MTOR and RPTOR, leading to phosphorylation and release of RPS6KB1 and binding of EIF4B to eIF-3.

The protein resides in the cytoplasm. In terms of biological role, mRNA cap-binding component of the eukaryotic translation initiation factor 3 (eIF-3) complex, a complex required for several steps in the initiation of protein synthesis of a specialized repertoire of mRNAs. The eIF-3 complex associates with the 40S ribosome and facilitates the recruitment of eIF-1, eIF-1A, eIF-2:GTP:methionyl-tRNAi and eIF-5 to form the 43S pre-initiation complex (43S PIC). The eIF-3 complex stimulates mRNA recruitment to the 43S PIC and scanning of the mRNA for AUG recognition. The eIF-3 complex is also required for disassembly and recycling of post-termination ribosomal complexes and subsequently prevents premature joining of the 40S and 60S ribosomal subunits prior to initiation. The eIF-3 complex specifically targets and initiates translation of a subset of mRNAs involved in cell proliferation, including cell cycling, differentiation and apoptosis, and uses different modes of RNA stem-loop binding to exert either translational activation or repression. In the eIF-3 complex, EIF3D specifically recognizes and binds the 7-methylguanosine cap of a subset of mRNAs. In Macaca fascicularis (Crab-eating macaque), this protein is Eukaryotic translation initiation factor 3 subunit D.